Reading from the N-terminus, the 342-residue chain is Erlin-1 (342 aa).

The Cytoplasmic portion of the chain corresponds to 1-6 (MAHVGA). A helical membrane pass occupies residues 7–23 (VVAAMAGLMAILLHSSI). Topologically, residues 24 to 342 (HKIEEGHLAV…ASKPKASEGH (319 aa)) are lumenal. N-linked (GlcNAc...) asparagine glycosylation is present at N106. The disordered stretch occupies residues 308–342 (SSASRPAAGESEQLESLSMRESLKKASKPKASEGH).

It belongs to the band 7/mec-2 family.

The protein resides in the endoplasmic reticulum membrane. Its function is as follows. Mediates the endoplasmic reticulum-associated degradation (ERAD) of inositol 1,4,5-trisphosphate receptors (IP3Rs). Involved in regulation of cellular cholesterol homeostasis by regulation the SREBP signaling pathway. Binds cholesterol and may promote ER retention of the SCAP-SREBF complex. In Danio rerio (Zebrafish), this protein is Erlin-1.